A 737-amino-acid polypeptide reads, in one-letter code: Protein-glucosylgalactosylhydroxylysine glucosidase (737 aa).

300 to 301 (WD) is a substrate binding site. E430 functions as the Proton donor in the catalytic mechanism. 498 to 499 (KQ) is a binding site for substrate. Residues 681-737 (RSAGRIQMSPPKLPGSSSSEFPGRTFSDVRDPLQSPLWVTLGSSSPTESLTVDPASE) are disordered. The segment covering 721-730 (LGSSSPTESL) has biased composition (polar residues).

Belongs to the glycosyl hydrolase 65 family.

The enzyme catalyses (5R)-5-O-[alpha-D-glucosyl-(1-&gt;2)-beta-D-galactosyl]-5-hydroxy-L-lysyl-[collagen] + H2O = (5R)-5-O-(beta-D-galactosyl)-5-hydroxy-L-lysyl-[collagen] + D-glucose. Functionally, catalyzes the hydrolysis of glucose from the disaccharide unit linked to hydroxylysine residues of collagen and collagen-like proteins. The protein is Protein-glucosylgalactosylhydroxylysine glucosidase of Homo sapiens (Human).